Reading from the N-terminus, the 292-residue chain is MEPPQHQHHHHQADQESGNNNNNKSGSGGYTCRQTSTRWTPTTEQIKILKELYYNNAIRSPTADQIQKITARLRQFGKIEGKNVFYWFQNHKARERQKKRFNGTNMTTPSSSPNSVMMAANDHYHPLLHHHHGVPMQRPANSVNVKLNQDHHLYHHNKPYPSFNNGNLNHASSGTECGVVNASNGYMSSHVYGSMEQDCSMNYNNVGGGWANMDHHYSSAPYNFFDRAKPLFGLEGHQEEEECGGDAYLEHRRTLPLFPMHGEDHINGGSGAIWKYGQSEVRPCASLELRLN.

Over residues 1-11 (MEPPQHQHHHH) the composition is skewed to basic residues. The tract at residues 1–40 (MEPPQHQHHHHQADQESGNNNNNKSGSGGYTCRQTSTRWT) is disordered. The homeobox; WUS-type DNA-binding region spans 34 to 99 (QTSTRWTPTT…NHKARERQKK (66 aa)).

It belongs to the WUS homeobox family. As to quaternary structure, interacts with TPL and TPR4. Interacts with BZIP30. In the active shoot meristem, it is specifically expressed in a small cell group underneath the presume position of stem cells. Also expressed in the floral meristem. Expressed in the nucellus of ovule primordia.

It is found in the nucleus. Functionally, transcription factor that plays a central role during early embryogenesis, oogenesis and flowering, probably by regulating expression of specific genes. Required to specify stem cell identity in meristems, such as shoot apical meristem (SAM). May induce shoot stem cells activity in order to maintain the stem cell identity. Involved in the developmental root meristem. In shoot apices, it is sufficient to induce the expression of CLV3, a putative ligand of the CLV signaling pathway. Also required to sustain organogenesis in the floral meristem by contributing to the expression of its own repressor, the AGAMOUS (AG) gene at the end of flower development. Binds directly to the 5'-TTAAT[GC][GC]-3' DNA sequence in the regulatory sequence of AG and activates its expression directly. Regulates one important step in ovule development to induce integument formation from the underlying chalazal domain. Participates in the promotion of vegetative to embryonic transition. Required to repress LEC1 expression. The protein is Protein WUSCHEL (WUS) of Arabidopsis thaliana (Mouse-ear cress).